A 339-amino-acid chain; its full sequence is Phosphoribosylformylglycinamidine cyclo-ligase (339 aa).

It belongs to the AIR synthase family.

The protein resides in the cytoplasm. The catalysed reaction is 2-formamido-N(1)-(5-O-phospho-beta-D-ribosyl)acetamidine + ATP = 5-amino-1-(5-phospho-beta-D-ribosyl)imidazole + ADP + phosphate + H(+). It functions in the pathway purine metabolism; IMP biosynthesis via de novo pathway; 5-amino-1-(5-phospho-D-ribosyl)imidazole from N(2)-formyl-N(1)-(5-phospho-D-ribosyl)glycinamide: step 2/2. This chain is Phosphoribosylformylglycinamidine cyclo-ligase, found in Desulfitobacterium hafniense (strain DSM 10664 / DCB-2).